A 66-amino-acid chain; its full sequence is Large ribosomal subunit protein bL35 (66 aa).

Positions 20–40 (GKIKSTQSAKRHGMTKRSKRS) are disordered. Positions 28–40 (AKRHGMTKRSKRS) are enriched in basic residues.

The protein belongs to the bacterial ribosomal protein bL35 family.

This is Large ribosomal subunit protein bL35 from Ehrlichia chaffeensis (strain ATCC CRL-10679 / Arkansas).